Reading from the N-terminus, the 73-residue chain is Putative beta-defensin 108A (73 aa).

Residues 1 to 22 form the signal peptide; it reads MRIAVLFFTIFFFMSQVLPAKG. 3 disulfides stabilise this stretch: Cys-28–Cys-55, Cys-35–Cys-49, and Cys-39–Cys-56.

This sequence belongs to the beta-defensin family.

It localises to the secreted. Has antibacterial activity. This Homo sapiens (Human) protein is Putative beta-defensin 108A.